Here is a 385-residue protein sequence, read N- to C-terminus: Cell division protein FtsZ (385 aa).

Residues 37–41 (GGGSN), 125–127 (GTG), E156, K160, and D204 contribute to the GTP site.

This sequence belongs to the FtsZ family. Homodimer. Polymerizes to form a dynamic ring structure in a strictly GTP-dependent manner. Interacts directly with several other division proteins.

Its subcellular location is the cytoplasm. Its function is as follows. Essential cell division protein that forms a contractile ring structure (Z ring) at the future cell division site. The regulation of the ring assembly controls the timing and the location of cell division. One of the functions of the FtsZ ring is to recruit other cell division proteins to the septum to produce a new cell wall between the dividing cells. Binds GTP and shows GTPase activity. The protein is Cell division protein FtsZ of Helicobacter pylori (strain ATCC 700392 / 26695) (Campylobacter pylori).